A 382-amino-acid chain; its full sequence is Beta-lactamase CMY-10 (382 aa).

The first 23 residues, 1–23 (MQQRQSILWGAVATLMWAGLAHA), serve as a signal peptide directing secretion. The active-site Acyl-ester intermediate is S88. S88 lines the AMP pocket. Residues S88, Q144, Y174, T336, S338, and N363 each coordinate GMP. S88, Q144, Y174, T336, S338, and N363 together coordinate IMP. Y174 contacts AMP. S338 is an AMP binding site.

It belongs to the class-C beta-lactamase family. As to quaternary structure, monomer.

It catalyses the reaction a beta-lactam + H2O = a substituted beta-amino acid. Its activity is regulated as follows. Inhibited by various nucleotides in vitro, including adenosine 5'-(P-acetyl)monophosphate (acAMP), inosine-5'-monophosphate (IMP) and guanosine-5'-monophosphate (GMP); IMP and GMP exhibit strongest competitive inhibition. Inhibited by the beta-lactamase-blocking agent, avibactam. Inhibited by clavulanic acid. Weakly inhibited by citric acid. In terms of biological role, class C beta-lactamase which confers resistance to penicillins and cephalosporins. Has benzylpenicillin-, ceftazidime-, nitrocefin- and imipenem-hydrolyzing activity. The sequence is that of Beta-lactamase CMY-10 from Klebsiella aerogenes (Enterobacter aerogenes).